A 141-amino-acid polypeptide reads, in one-letter code: Histone H2B (141 aa).

Residues 1-10 (MAPKAAEKKP) show a composition bias toward basic and acidic residues. A disordered region spans residues 1–49 (MAPKAAEKKPSTGGKAPAGGKAPAEKKEAGKKTAAAASGDKKKRGKTRK). 2 positions are modified to N6-acetyllysine; alternate: Lys-8 and Lys-9. Glycyl lysine isopeptide (Lys-Gly) (interchain with G-Cter in SUMO); alternate cross-links involve residues Lys-8 and Lys-9. A compositionally biased stretch (low complexity) spans 11–22 (STGGKAPAGGKA). Lys-15 is modified (N6-acetyllysine). Lys-26 is modified (N6-acetyllysine; alternate). Lys-26 participates in a covalent cross-link: Glycyl lysine isopeptide (Lys-Gly) (interchain with G-Cter in SUMO); alternate. Lys-27 is covalently cross-linked (Glycyl lysine isopeptide (Lys-Gly) (interchain with G-Cter in SUMO)). Lys-135 participates in a covalent cross-link: Glycyl lysine isopeptide (Lys-Gly) (interchain with G-Cter in ubiquitin).

Belongs to the histone H2B family. In terms of assembly, the nucleosome is a histone octamer containing two molecules each of H2A, H2B, H3 and H4 assembled in one H3-H4 heterotetramer and two H2A-H2B heterodimers. The octamer wraps approximately 147 bp of DNA. Post-translationally, monoubiquitinated by the ubc2-bre1 complex to form H2BK123ub1. H2BK123ub1 gives a specific tag for epigenetic transcriptional activation and is also prerequisite for H3K4me and H3K79me formation. H2BK123ub1 also modulates the formation of double-strand breaks during meiosis and is a prerequisite for DNA-damage checkpoint activation. In terms of processing, acetylated by gcn5 to form H2BK11ac and H2BK16ac. H2BK16ac can also be formed by esa1. Acetylation of N-terminal lysines and particularly formation of H2BK11acK16ac has a positive effect on transcription. Sumoylation to form H2BK6su or H2BK7su, and probably also H2BK16su or H2BK17su, occurs preferentially near the telomeres and represses gene transcription.

Its subcellular location is the nucleus. It is found in the chromosome. In terms of biological role, core component of nucleosome. Nucleosomes wrap and compact DNA into chromatin, limiting DNA accessibility to the cellular machineries which require DNA as a template. Histones thereby play a central role in transcription regulation, DNA repair, DNA replication and chromosomal stability. DNA accessibility is regulated via a complex set of post-translational modifications of histones, also called histone code, and nucleosome remodeling. This is Histone H2B (htb1) from Aspergillus oryzae (strain ATCC 42149 / RIB 40) (Yellow koji mold).